Consider the following 1031-residue polypeptide: Protein translocase subunit SecA (1031 aa).

ATP contacts are provided by residues Gln143, 161–165 (GEGKT), and Asp661. A compositionally biased stretch (basic and acidic residues) spans 963-973 (KERLVAKHEES). The tract at residues 963–1031 (KERLVAKHEE…GKKYKNCCGR (69 aa)) is disordered. Cys1017, Cys1019, Cys1028, and Cys1029 together coordinate Zn(2+).

This sequence belongs to the SecA family. As to quaternary structure, monomer and homodimer. Part of the essential Sec protein translocation apparatus which comprises SecA, SecYEG and auxiliary proteins SecDF. Other proteins may also be involved. Zn(2+) is required as a cofactor.

The protein resides in the cell inner membrane. The protein localises to the cytoplasm. It carries out the reaction ATP + H2O + cellular proteinSide 1 = ADP + phosphate + cellular proteinSide 2.. Part of the Sec protein translocase complex. Interacts with the SecYEG preprotein conducting channel. Has a central role in coupling the hydrolysis of ATP to the transfer of proteins into and across the cell membrane, serving as an ATP-driven molecular motor driving the stepwise translocation of polypeptide chains across the membrane. The protein is Protein translocase subunit SecA of Prosthecochloris aestuarii (strain DSM 271 / SK 413).